The sequence spans 209 residues: Uracil phosphoribosyltransferase (209 aa).

Residues Arg79, Arg104, and 131-139 contribute to the 5-phospho-alpha-D-ribose 1-diphosphate site; that span reads DPMLATGNS. Residues Ile194 and 199 to 201 contribute to the uracil site; that span reads GDA. Asp200 is a 5-phospho-alpha-D-ribose 1-diphosphate binding site.

This sequence belongs to the UPRTase family. Requires Mg(2+) as cofactor.

The catalysed reaction is UMP + diphosphate = 5-phospho-alpha-D-ribose 1-diphosphate + uracil. The protein operates within pyrimidine metabolism; UMP biosynthesis via salvage pathway; UMP from uracil: step 1/1. Allosterically activated by GTP. Catalyzes the conversion of uracil and 5-phospho-alpha-D-ribose 1-diphosphate (PRPP) to UMP and diphosphate. In Rhizobium leguminosarum bv. trifolii (strain WSM2304), this protein is Uracil phosphoribosyltransferase.